The sequence spans 440 residues: Translation initiation factor eIF2B subunit gamma (440 aa).

This sequence belongs to the eIF-2B gamma/epsilon subunits family. Component of the translation initiation factor 2B (eIF2B) complex which is a heterodecamer of two sets of five different subunits: alpha, beta, gamma, delta and epsilon. Subunits alpha, beta and delta comprise a regulatory subcomplex and subunits epsilon and gamma comprise a catalytic subcomplex. Within the complex, the hexameric regulatory complex resides at the center, with the two heterodimeric catalytic subcomplexes bound on opposite sides.

It localises to the cytoplasm. It is found in the cytosol. In terms of biological role, acts as a component of the translation initiation factor 2B (eIF2B) complex, which catalyzes the exchange of GDP for GTP on the eukaryotic initiation factor 2 (eIF2) complex gamma subunit. Its guanine nucleotide exchange factor activity is repressed when bound to eIF2 complex phosphorylated on the alpha subunit, thereby limiting the amount of methionyl-initiator methionine tRNA available to the ribosome and consequently global translation is repressed. The chain is Translation initiation factor eIF2B subunit gamma (eif2b3) from Dictyostelium discoideum (Social amoeba).